A 344-amino-acid chain; its full sequence is L-rhamnose-proton symporter (344 aa).

The next 10 helical transmembrane spans lie at 4–24 (AITM…CFYA), 38–58 (WSVG…ATLL), 72–92 (TLLP…NYGL), 101–121 (MGIG…TPII), 131–151 (TQGG…VGIV), 175–195 (LLLA…MNAA), 214–234 (LPSY…FCFI), 259–279 (LLLS…YAWG), 290–310 (MSWM…GLVL), and 323–343 (VLSL…LGMA).

This sequence belongs to the L-rhamnose transporter (TC 2.A.7.6) family.

It is found in the cell inner membrane. The enzyme catalyses L-rhamnopyranose(in) + H(+)(in) = L-rhamnopyranose(out) + H(+)(out). Its function is as follows. Uptake of L-rhamnose across the cytoplasmic membrane with the concomitant transport of protons into the cell (symport system). In Klebsiella pneumoniae (strain 342), this protein is L-rhamnose-proton symporter.